Consider the following 555-residue polypeptide: Potassium-transporting ATPase potassium-binding subunit (555 aa).

The next 10 membrane-spanning stretches (helical) occupy residues 2 to 22 (IWVA…PTGI), 60 to 80 (QYAL…YFIF), 130 to 150 (IGIT…VMAF), 173 to 193 (VFLP…VPQT), 246 to 266 (MSNI…PFTY), 278 to 298 (ILFV…TTSE), 374 to 394 (AGFV…GLMV), 412 to 432 (LIAV…ALAL), 483 to 503 (LVMF…AASL), and 525 to 545 (GIFI…MLVL).

The protein belongs to the KdpA family. In terms of assembly, the system is composed of three essential subunits: KdpA, KdpB and KdpC.

Its subcellular location is the cell membrane. In terms of biological role, part of the high-affinity ATP-driven potassium transport (or Kdp) system, which catalyzes the hydrolysis of ATP coupled with the electrogenic transport of potassium into the cytoplasm. This subunit binds the extracellular potassium ions and delivers the ions to the membrane domain of KdpB through an intramembrane tunnel. The polypeptide is Potassium-transporting ATPase potassium-binding subunit (Bacillus thuringiensis subsp. konkukian (strain 97-27)).